A 309-amino-acid polypeptide reads, in one-letter code: Anamorsin (309 aa).

Residues 6–172 (ISPGQLVAVF…KPNFEVGSSS (167 aa)) are N-terminal SAM-like domain. Residues 173–222 (QLKLPNKKSSSVKPVVDPAAAKLWTLSANDMEDDSVDLIDSDELLDPEDL) are linker. Ser182, Ser183, and Ser213 each carry phosphoserine. [2Fe-2S] cluster-binding residues include Cys235, Cys244, Cys247, and Cys249. The fe-S binding site A stretch occupies residues 235 to 249 (CGEGKKRKACKNCTC). Phosphoserine is present on Ser269. Positions 271, 274, 282, and 285 each coordinate [4Fe-4S] cluster. 2 consecutive short sequence motifs (cx2C motif) follow at residues 271-274 (CGNC) and 282-285 (CANC). Residues 271–285 (CGNCYLGDAFRCANC) are fe-S binding site B. Phosphoserine occurs at positions 302 and 304.

Belongs to the anamorsin family. Monomer. Interacts with NDOR1. Interacts with CHCHD4. It depends on [2Fe-2S] cluster as a cofactor. Requires [4Fe-4S] cluster as cofactor.

The protein localises to the cytoplasm. It is found in the nucleus. The protein resides in the mitochondrion intermembrane space. Functionally, component of the cytosolic iron-sulfur (Fe-S) protein assembly (CIA) machinery required for the maturation of extramitochondrial Fe-S proteins. Part of an electron transfer chain functioning in an early step of cytosolic Fe-S biogenesis, facilitating the de novo assembly of a [4Fe-4S] cluster on the scaffold complex NUBP1-NUBP2. Electrons are transferred to CIAPIN1 from NADPH via the FAD- and FMN-containing protein NDOR1. NDOR1-CIAPIN1 are also required for the assembly of the diferric tyrosyl radical cofactor of ribonucleotide reductase (RNR), probably by providing electrons for reduction during radical cofactor maturation in the catalytic small subunit. Has anti-apoptotic effects in the cell. Involved in negative control of cell death upon cytokine withdrawal. Promotes development of hematopoietic cells. This Mus musculus (Mouse) protein is Anamorsin.